The following is a 194-amino-acid chain: dCTP deaminase (194 aa).

DCTP-binding positions include 110–115 (RSSLAR), D128, 136–138 (VLE), Y171, K178, and Q182. E138 functions as the Proton donor/acceptor in the catalytic mechanism. A disordered region spans residues 172–194 (NKRKSAKYRDQQEAVASRISQDK).

The protein belongs to the dCTP deaminase family. In terms of assembly, homotrimer.

It carries out the reaction dCTP + H2O + H(+) = dUTP + NH4(+). It participates in pyrimidine metabolism; dUMP biosynthesis; dUMP from dCTP (dUTP route): step 1/2. In terms of biological role, catalyzes the deamination of dCTP to dUTP. This is dCTP deaminase from Shewanella loihica (strain ATCC BAA-1088 / PV-4).